The primary structure comprises 476 residues: ATP synthase subunit beta (476 aa).

154-161 (GGAGVGKT) provides a ligand contact to ATP.

This sequence belongs to the ATPase alpha/beta chains family. In terms of assembly, F-type ATPases have 2 components, CF(1) - the catalytic core - and CF(0) - the membrane proton channel. CF(1) has five subunits: alpha(3), beta(3), gamma(1), delta(1), epsilon(1). CF(0) has three main subunits: a(1), b(2) and c(9-12). The alpha and beta chains form an alternating ring which encloses part of the gamma chain. CF(1) is attached to CF(0) by a central stalk formed by the gamma and epsilon chains, while a peripheral stalk is formed by the delta and b chains.

It localises to the cell inner membrane. The catalysed reaction is ATP + H2O + 4 H(+)(in) = ADP + phosphate + 5 H(+)(out). Functionally, produces ATP from ADP in the presence of a proton gradient across the membrane. The catalytic sites are hosted primarily by the beta subunits. This chain is ATP synthase subunit beta, found in Nitrobacter winogradskyi (strain ATCC 25391 / DSM 10237 / CIP 104748 / NCIMB 11846 / Nb-255).